The chain runs to 502 residues: UPF0371 protein CTC_00401 (502 aa).

It belongs to the UPF0371 family.

This chain is UPF0371 protein CTC_00401, found in Clostridium tetani (strain Massachusetts / E88).